A 149-amino-acid polypeptide reads, in one-letter code: D-aminoacyl-tRNA deacylase (149 aa).

Residues 139–140 carry the Gly-cisPro motif, important for rejection of L-amino acids motif; sequence GP.

Belongs to the DTD family. As to quaternary structure, homodimer.

It is found in the cytoplasm. The catalysed reaction is glycyl-tRNA(Ala) + H2O = tRNA(Ala) + glycine + H(+). The enzyme catalyses a D-aminoacyl-tRNA + H2O = a tRNA + a D-alpha-amino acid + H(+). An aminoacyl-tRNA editing enzyme that deacylates mischarged D-aminoacyl-tRNAs. Also deacylates mischarged glycyl-tRNA(Ala), protecting cells against glycine mischarging by AlaRS. Acts via tRNA-based rather than protein-based catalysis; rejects L-amino acids rather than detecting D-amino acids in the active site. By recycling D-aminoacyl-tRNA to D-amino acids and free tRNA molecules, this enzyme counteracts the toxicity associated with the formation of D-aminoacyl-tRNA entities in vivo and helps enforce protein L-homochirality. The chain is D-aminoacyl-tRNA deacylase (dtd1) from Schizosaccharomyces pombe (strain 972 / ATCC 24843) (Fission yeast).